Reading from the N-terminus, the 352-residue chain is Pollen-specific protein SF21 (352 aa).

Belongs to the NDRG family. As to expression, pollen.

The polypeptide is Pollen-specific protein SF21 (SF21) (Helianthus annuus (Common sunflower)).